The chain runs to 206 residues: LOB domain-containing protein 35 (206 aa).

The 102-residue stretch at 4 to 105 (TCCSACKVMK…EQINSAKNEL (102 aa)) folds into the LOB domain. Residues 184 to 206 (ASTSGGTSATQKTLPFPQNHNQP) are disordered.

This sequence belongs to the LOB domain-containing protein family.

This chain is LOB domain-containing protein 35 (LBD35), found in Arabidopsis thaliana (Mouse-ear cress).